The chain runs to 338 residues: Ketol-acid reductoisomerase (NADP(+)) (338 aa).

Positions 1 to 181 (MKVYYENDAD…GGTKAGVIET (181 aa)) constitute a KARI N-terminal Rossmann domain. NADP(+) contacts are provided by residues 24–27 (FGSQ), K47, S50, S52, and 82–85 (DQVQ). H107 is a catalytic residue. G133 serves as a coordination point for NADP(+). Residues 182–327 (NFKDETETDL…EKLRGMMSWL (146 aa)) form the KARI C-terminal knotted domain. Mg(2+) contacts are provided by D190, E194, E226, and E230. S251 lines the substrate pocket.

It belongs to the ketol-acid reductoisomerase family. The cofactor is Mg(2+).

It carries out the reaction (2R)-2,3-dihydroxy-3-methylbutanoate + NADP(+) = (2S)-2-acetolactate + NADPH + H(+). The catalysed reaction is (2R,3R)-2,3-dihydroxy-3-methylpentanoate + NADP(+) = (S)-2-ethyl-2-hydroxy-3-oxobutanoate + NADPH + H(+). It functions in the pathway amino-acid biosynthesis; L-isoleucine biosynthesis; L-isoleucine from 2-oxobutanoate: step 2/4. It participates in amino-acid biosynthesis; L-valine biosynthesis; L-valine from pyruvate: step 2/4. Involved in the biosynthesis of branched-chain amino acids (BCAA). Catalyzes an alkyl-migration followed by a ketol-acid reduction of (S)-2-acetolactate (S2AL) to yield (R)-2,3-dihydroxy-isovalerate. In the isomerase reaction, S2AL is rearranged via a Mg-dependent methyl migration to produce 3-hydroxy-3-methyl-2-ketobutyrate (HMKB). In the reductase reaction, this 2-ketoacid undergoes a metal-dependent reduction by NADPH to yield (R)-2,3-dihydroxy-isovalerate. In Chloroherpeton thalassium (strain ATCC 35110 / GB-78), this protein is Ketol-acid reductoisomerase (NADP(+)).